The sequence spans 509 residues: Ribonuclease Y (509 aa).

Residues 3–23 traverse the membrane as a helical segment; the sequence is IIFSSIFAGFILGFLIRVFLG. The KH domain maps to 197-257; that stretch reads TVASVELPND…IRKELAKRTL (61 aa). The region spanning 323–418 is the HD domain; sequence VLSHSKETAI…VQIADAISAS (96 aa).

It belongs to the RNase Y family.

It localises to the cell membrane. Endoribonuclease that initiates mRNA decay. The sequence is that of Ribonuclease Y from Borreliella afzelii (strain PKo) (Borrelia afzelii).